The primary structure comprises 363 residues: Probable auxin efflux carrier component 5a (363 aa).

10 helical membrane passes run Val7–Ser27, Cys39–Thr59, Val72–Phe92, Ser103–Ala123, Leu134–Leu154, Phe222–Phe242, Val246–Ala266, Leu281–Val301, Val307–Ala327, and Ile342–Ile362.

Belongs to the auxin efflux carrier (TC 2.A.69.1) family. In terms of tissue distribution, expressed in leaves, shoot apex and panicles. Expressed in roots, stem bases, stems, leaves and young panicles.

Its subcellular location is the membrane. May act as a component of the auxin efflux carrier. In Oryza sativa subsp. japonica (Rice), this protein is Probable auxin efflux carrier component 5a.